The primary structure comprises 191 residues: uncharacterized protein (191 aa).

Residues 6 to 66 (GLTQKMIVDA…ELAVRGLTKL (61 aa)) form the HTH tetR-type domain. Positions 29 to 48 (SLAALSKKMNVRPPSLYNHI) form a DNA-binding region, H-T-H motif.

This is an uncharacterized protein from Bacillus subtilis (strain 168).